Consider the following 372-residue polypeptide: DNA replication and repair protein RecF (372 aa).

Residue 30–37 coordinates ATP; that stretch reads GENAQGKT.

Belongs to the RecF family.

It is found in the cytoplasm. The RecF protein is involved in DNA metabolism; it is required for DNA replication and normal SOS inducibility. RecF binds preferentially to single-stranded, linear DNA. It also seems to bind ATP. This Shouchella clausii (strain KSM-K16) (Alkalihalobacillus clausii) protein is DNA replication and repair protein RecF.